The following is a 662-amino-acid chain: 72 kDa type IV collagenase (662 aa).

A signal peptide spans 1-29 (MEARVAWGALAGPLRVLCVLCCLLGRAIA). Positions 30 to 109 (APSPIIKFPG…PRCGNPDVAN (80 aa)) are cleaved as a propeptide — activation peptide. The short motif at 100 to 107 (PRCGNPDV) is the Cysteine switch element. A Zn(2+)-binding site is contributed by Cys102. Positions 110 to 221 (YNFFPRKPKW…LWTLGEGQVV (112 aa)) are collagenase-like 1. Asp134 and Asp168 together coordinate Ca(2+). The Zn(2+) site is built by His178 and Asp180. Residues Asp185 and Gly186 each contribute to the Ca(2+) site. His193 is a Zn(2+) binding site. Positions 200, 202, and 204 each coordinate Ca(2+). His206 contributes to the Zn(2+) binding site. Ca(2+) is bound by residues Asp208, Asp209, and Glu211. Residues 222–396 (RVKYGNADGE…WGFCPDQGYS (175 aa)) are collagen-binding. Fibronectin type-II domains lie at 228–276 (ADGE…FCPH), 286–334 (ADGQ…FCPE), and 344–392 (SEGA…FCPD). Disulfide bonds link Cys233-Cys259, Cys247-Cys274, Cys291-Cys317, Cys305-Cys332, Cys349-Cys375, and Cys363-Cys390. The interval 397–467 (LFLVAAHEFG…GPTPTLGPVT (71 aa)) is collagenase-like 2. His403 provides a ligand contact to Zn(2+). Glu404 is a catalytic residue. 2 residues coordinate Zn(2+): His407 and His413. The required for inhibitor TIMP2 binding stretch occupies residues 414–662 (SQDPGALMAP…GSIKSDWLGC (249 aa)). The tract at residues 446-465 (GPSPDADTDTGTGPTPTLGP) is disordered. A disulfide bond links Cys471 and Cys662. Hemopexin repeat units lie at residues 474-518 (DIVF…WPEL), 519-565 (PEKI…GLPP), 567-615 (VQQV…WNAI), and 616-662 (PDNL…WLGC). Residues Asp478, Asp523, and Asp571 each coordinate Ca(2+). A glycan (N-linked (GlcNAc...) asparagine) is linked at Asn575. Asp620 lines the Ca(2+) pocket. N-linked (GlcNAc...) asparagine glycosylation is present at Asn644.

Belongs to the peptidase M10A family. In terms of assembly, interacts (via the C-terminal hemopexin-like domains-containing region) with the integrin alpha-V/beta-3; the interaction promotes vascular invasion in angiogenic vessels and melamoma cells. Interacts (via the C-terminal PEX domain) with TIMP2 (via the C-terminal); the interaction inhibits the degradation activity. Interacts with GSK3B. Ca(2+) is required as a cofactor. Zn(2+) serves as cofactor. Phosphorylation on multiple sites modulates enzymatic activity. Phosphorylated by PKC in vitro. In terms of processing, the propeptide is processed by MMP14 (MT-MMP1) and MMP16 (MT-MMP3). Autocatalytic cleavage in the C-terminal produces the anti-angiogenic peptide, PEX. This processing appears to be facilitated by binding integrinv/beta3.

Its subcellular location is the secreted. The protein localises to the extracellular space. It is found in the extracellular matrix. The protein resides in the membrane. It localises to the nucleus. Its subcellular location is the cytoplasm. The protein localises to the mitochondrion. The enzyme catalyses Cleavage of gelatin type I and collagen types IV, V, VII, X. Cleaves the collagen-like sequence Pro-Gln-Gly-|-Ile-Ala-Gly-Gln.. Functionally, ubiquitinous metalloproteinase that is involved in diverse functions such as remodeling of the vasculature, angiogenesis, tissue repair, tumor invasion, inflammation, and atherosclerotic plaque rupture. As well as degrading extracellular matrix proteins, can also act on several nonmatrix proteins such as big endothelial 1 and beta-type CGRP promoting vasoconstriction. Also cleaves KISS at a Gly-|-Leu bond. Appears to have a role in myocardial cell death pathways. Contributes to myocardial oxidative stress by regulating the activity of GSK3beta. Cleaves GSK3beta in vitro. Involved in the formation of the fibrovascular tissues. PEX, the C-terminal non-catalytic fragment of MMP2, possesses anti-angiogenic and anti-tumor properties and inhibits cell migration and cell adhesion to FGF2 and vitronectin. Ligand for integrin alpha-v/beta-3 on the surface of blood vessels. Its function is as follows. Mediates the proteolysis of CHUK/IKKA and initiates a primary innate immune response by inducing mitochondrial-nuclear stress signaling with activation of the pro-inflammatory NF-kappaB, NFAT and IRF transcriptional pathways. This Mus musculus (Mouse) protein is 72 kDa type IV collagenase (Mmp2).